The primary structure comprises 289 residues: Serine/threonine-protein phosphatase Pgam5, mitochondrial (289 aa).

A helical transmembrane segment spans residues 7 to 23; sequence FVCGTGAGLAAYYLQRL.

The protein belongs to the phosphoglycerate mutase family. BPG-dependent PGAM subfamily. Interacts with Pk92B/ASK1.

The protein resides in the mitochondrion outer membrane. It catalyses the reaction O-phospho-L-seryl-[protein] + H2O = L-seryl-[protein] + phosphate. The enzyme catalyses O-phospho-L-threonyl-[protein] + H2O = L-threonyl-[protein] + phosphate. Its function is as follows. Displays phosphatase activity for serine/threonine residues, and dephosphorylates and activates Pk92B kinase. Has apparently no phosphoglycerate mutase activity. This chain is Serine/threonine-protein phosphatase Pgam5, mitochondrial (Pgam5), found in Drosophila melanogaster (Fruit fly).